Reading from the N-terminus, the 208-residue chain is Uracil phosphoribosyltransferase (208 aa).

5-phospho-alpha-D-ribose 1-diphosphate contacts are provided by residues Arg78, Arg103, and 130–138 (DPMLATGGT). Uracil-binding positions include Ile193 and 198 to 200 (GDA). Position 199 (Asp199) interacts with 5-phospho-alpha-D-ribose 1-diphosphate.

The protein belongs to the UPRTase family. It depends on Mg(2+) as a cofactor.

The enzyme catalyses UMP + diphosphate = 5-phospho-alpha-D-ribose 1-diphosphate + uracil. The protein operates within pyrimidine metabolism; UMP biosynthesis via salvage pathway; UMP from uracil: step 1/1. With respect to regulation, allosterically activated by GTP. Its function is as follows. Catalyzes the conversion of uracil and 5-phospho-alpha-D-ribose 1-diphosphate (PRPP) to UMP and diphosphate. The polypeptide is Uracil phosphoribosyltransferase (Nitratidesulfovibrio vulgaris (strain DSM 19637 / Miyazaki F) (Desulfovibrio vulgaris)).